A 299-amino-acid chain; its full sequence is Formylglycine-generating enzyme (299 aa).

Positions 263 and 268 each coordinate Cu cation.

This sequence belongs to the sulfatase-modifying factor family. Requires Cu cation as cofactor.

It carries out the reaction L-cysteinyl-[sulfatase] + 2 a thiol + O2 = an organic disulfide + 3-oxo-L-alanyl-[sulfatase] + hydrogen sulfide + H2O + H(+). Its pathway is protein modification; sulfatase oxidation. Functionally, oxidase that catalyzes the conversion of cysteine to 3-oxoalanine on target proteins. 3-oxoalanine modification, which is also named formylglycine (fGly), occurs in the maturation of arylsulfatases and some alkaline phosphatases that use the hydrated form of 3-oxoalanine as a catalytic nucleophile. The chain is Formylglycine-generating enzyme from Mycobacterium tuberculosis (strain ATCC 25618 / H37Rv).